The following is a 180-amino-acid chain: Ribulose bisphosphate carboxylase small subunit, chloroplastic 4 (180 aa).

A chloroplast-targeting transit peptide spans 1 to 56 (MASSIVSSAAVATRANGAQASMVGPFTGLKSTASFPVSRKQNLDITSIASNGGRVR).

The protein belongs to the RuBisCO small chain family. As to quaternary structure, heterohexadecamer of 8 large and 8 small subunits.

The protein resides in the plastid. It is found in the chloroplast. RuBisCO catalyzes two reactions: the carboxylation of D-ribulose 1,5-bisphosphate, the primary event in carbon dioxide fixation, as well as the oxidative fragmentation of the pentose substrate. Both reactions occur simultaneously and in competition at the same active site. Although the small subunit is not catalytic it is essential for maximal activity. This chain is Ribulose bisphosphate carboxylase small subunit, chloroplastic 4, found in Solanum tuberosum (Potato).